The chain runs to 360 residues: Phenylalanine--tRNA ligase alpha subunit (360 aa).

Glutamate 260 is a Mg(2+) binding site.

Belongs to the class-II aminoacyl-tRNA synthetase family. Phe-tRNA synthetase alpha subunit type 1 subfamily. Tetramer of two alpha and two beta subunits. Mg(2+) serves as cofactor.

The protein localises to the cytoplasm. It catalyses the reaction tRNA(Phe) + L-phenylalanine + ATP = L-phenylalanyl-tRNA(Phe) + AMP + diphosphate + H(+). This Paracoccus denitrificans (strain Pd 1222) protein is Phenylalanine--tRNA ligase alpha subunit.